The following is a 354-amino-acid chain: Uroporphyrinogen decarboxylase (354 aa).

Residues 27–31 (RQAGR), D77, Y154, T209, and H327 contribute to the substrate site.

This sequence belongs to the uroporphyrinogen decarboxylase family. Homodimer.

It is found in the cytoplasm. The catalysed reaction is uroporphyrinogen III + 4 H(+) = coproporphyrinogen III + 4 CO2. It functions in the pathway porphyrin-containing compound metabolism; protoporphyrin-IX biosynthesis; coproporphyrinogen-III from 5-aminolevulinate: step 4/4. Functionally, catalyzes the decarboxylation of four acetate groups of uroporphyrinogen-III to yield coproporphyrinogen-III. This is Uroporphyrinogen decarboxylase from Sodalis glossinidius (strain morsitans).